The chain runs to 328 residues: Malate dehydrogenase (328 aa).

Residue 12–18 (GAAGQIG) participates in NAD(+) binding. Residues Arg93 and Arg99 each contribute to the substrate site. Residues Asn106, Gln113, and 130–132 (VGN) each bind NAD(+). Substrate is bound by residues Asn132 and Arg166. The Proton acceptor role is filled by His191.

The protein belongs to the LDH/MDH superfamily. MDH type 2 family.

It catalyses the reaction (S)-malate + NAD(+) = oxaloacetate + NADH + H(+). In terms of biological role, catalyzes the reversible oxidation of malate to oxaloacetate. The protein is Malate dehydrogenase of Dechloromonas aromatica (strain RCB).